A 37-amino-acid polypeptide reads, in one-letter code: Alpha-conotoxin LvIA (37 aa).

Residues 1–20 (FRGRDAAAKASGLVGLTDRR) constitute a propeptide that is removed on maturation. Cystine bridges form between Cys22-Cys28 and Cys23-Cys36. Residues 24 to 26 (SHP) form a ser-Xaa-Pro motif, crucial for potent interaction with nAChR region. The residue at position 36 (Cys36) is a Cysteine amide.

It belongs to the conotoxin A superfamily. As to expression, expressed by the venom duct.

The protein resides in the secreted. Functionally, alpha-conotoxins act on postsynaptic membranes, they bind to the nicotinic acetylcholine receptors (nAChR) and thus inhibit them. This toxin blocks alpha-3-beta-2/CHRNA3-CHRNB2 nAChR with high selectivity (IC(50)=8.67 nM (on rat) and 17.5 (on human)). Also has weaker activity on alpha-6/alpha-3-beta-2-beta-3 (CHRNA6/CHRNA3-CHRNB2-CHRNB3) (IC(50)=108 nM (on rat)), alpha-6/alpha-3-beta-4 (CHRNA6/CHRNA3-CHRNB4) (IC(50)=121 nM (on rat)), alpha-3-beta-4 (CHRNA3-CHRNB4) (IC(50)=148 nM (on rat)), and alpha-7/CHRNA7 nAChRs (IC(50)=3000 nM (on rat)). When tested on mouse with hot-plate tests, this toxin significantly increases the base pain threshold and shows analgesic effects. The polypeptide is Alpha-conotoxin LvIA (Conus lividus (Livid cone)).